The chain runs to 153 residues: Transcription antitermination protein NusB (153 aa).

Belongs to the NusB family.

Functionally, involved in transcription antitermination. Required for transcription of ribosomal RNA (rRNA) genes. Binds specifically to the boxA antiterminator sequence of the ribosomal RNA (rrn) operons. This chain is Transcription antitermination protein NusB, found in Clostridium tetani (strain Massachusetts / E88).